The following is a 251-amino-acid chain: 5'-nucleotidase SurE (251 aa).

Positions 8, 9, 40, and 95 each coordinate a divalent metal cation.

Belongs to the SurE nucleotidase family. Requires a divalent metal cation as cofactor.

The protein resides in the cytoplasm. It catalyses the reaction a ribonucleoside 5'-phosphate + H2O = a ribonucleoside + phosphate. Its function is as follows. Nucleotidase that shows phosphatase activity on nucleoside 5'-monophosphates. The polypeptide is 5'-nucleotidase SurE (Lawsonia intracellularis (strain PHE/MN1-00)).